The chain runs to 155 residues: Small ribosomal subunit protein uS7c (155 aa).

It belongs to the universal ribosomal protein uS7 family. Part of the 30S ribosomal subunit.

The protein resides in the plastid. The protein localises to the chloroplast. In terms of biological role, one of the primary rRNA binding proteins, it binds directly to 16S rRNA where it nucleates assembly of the head domain of the 30S subunit. The protein is Small ribosomal subunit protein uS7c (rps7) of Coelogyne cristata (Orchid).